The chain runs to 227 residues: Pectinesterase inhibitor 28 (227 aa).

An N-terminal signal peptide occupies residues 1–25 (MASSMAPAAAMAILLLALLMPATLC). The interval 28-50 (SGPPSSKHGHGGHAKRAPPPASP) is disordered. A compositionally biased stretch (basic residues) spans 34 to 43 (KHGHGGHAKR). A disulfide bond links Cys-66 and Cys-75. Residues Asn-67, Asn-104, and Asn-117 are each glycosylated (N-linked (GlcNAc...) asparagine). Cys-139 and Cys-179 are disulfide-bonded.

Belongs to the PMEI family. Expressed in roots, leaves, culms and flag leaves.

The protein resides in the secreted. It localises to the extracellular space. The protein localises to the apoplast. In terms of biological role, pectin methylesterase (PME) inhibitor that inhibits PME in vitro. Functions as a critical structural modulator by regulating the degree of pectin methylesterification and the physiochemical properties of the cell wall components. The sequence is that of Pectinesterase inhibitor 28 from Oryza sativa subsp. japonica (Rice).